The following is a 367-amino-acid chain: B2 bradykinin receptor (367 aa).

Residues 1 to 36 (MLNITSQVLAPALNGSVSQSSGCPNTEWSGWLNVIQ) are Extracellular-facing. Residues Asn-3 and Asn-14 are each glycosylated (N-linked (GlcNAc...) asparagine). A helical membrane pass occupies residues 37 to 60 (APFLWVLFVLATLENLFVLSVFCL). The Cytoplasmic portion of the chain corresponds to 61–69 (HKSSCTVAE). The helical transmembrane segment at 70–94 (VYLGNLAAADLILACGLPFWAVTIA) threads the bilayer. Over 95–107 (NHFDWLFGEALCR) the chain is Extracellular. A disulfide bridge links Cys-106 with Cys-187. The chain crosses the membrane as a helical span at residues 108–129 (VVNTMIYMNLYSSICFLMLVSI). The Cytoplasmic portion of the chain corresponds to 130–151 (DRYLALVKTMSIGRMRRVRWAK). At Tyr-132 the chain carries Phosphotyrosine. Residues 152–174 (LYSLVIWGCTLLLSSPMLVFRTM) traverse the membrane as a helical segment. Residues 175 to 197 (KDYRDEGYNVTACIIDYPSRSWE) lie on the Extracellular side of the membrane. A glycan (N-linked (GlcNAc...) asparagine) is linked at Asn-183. Residues 198-224 (VFTNVLLNLVGFLLPLSVITFCTVQIL) traverse the membrane as a helical segment. Over 225–243 (QVLRNNEMQKFKEIQTERR) the chain is Cytoplasmic. Residues 244 to 268 (ATVLVLAVLLLFVVCWLPFQVSTFL) traverse the membrane as a helical segment. Topologically, residues 269–287 (DTLLKLGVLSSCWDEHVID) are extracellular. A helical transmembrane segment spans residues 288–311 (VITQVGSFMGYSNSCLNPLVYVIV). The Cytoplasmic segment spans residues 312–367 (GKRFRKKSREVYRAACPKAGCVLEPVQAESSMGTLRTSISVERQIHKLPEWTRSSQ). Tyr-323 carries the phosphotyrosine modification. Residue Cys-327 is the site of S-palmitoyl cysteine attachment. At Ser-342 the chain carries Phosphoserine. Phosphothreonine is present on Thr-345. Ser-349 and Ser-351 each carry phosphoserine; by GRK6.

It belongs to the G-protein coupled receptor 1 family. Bradykinin receptor subfamily. BDKRB2 sub-subfamily. In terms of assembly, forms a complex with PECAM1 and GNAQ. Interacts with PECAM1.

It is found in the cell membrane. Functionally, receptor for bradykinin. It is associated with G proteins that activate a phosphatidylinositol-calcium second messenger system. The sequence is that of B2 bradykinin receptor (BDKRB2) from Oryctolagus cuniculus (Rabbit).